A 341-amino-acid chain; its full sequence is COP9 signalosome complex subunit 6 (341 aa).

The interval 1–43 (MEQMEVDVDMSAKPSTSSSAAAGSSMAVDKTADQNPQPQGNIM) is disordered. The span at 11–27 (SAKPSTSSSAAAGSSMA) shows a compositional bias: low complexity. Residues 54–188 (ISLHPLVIMN…LKLFESLIDL (135 aa)) enclose the MPN domain.

This sequence belongs to the peptidase M67A family. CSN6 subfamily. Component of the CSN complex, probably composed of CSN1b, alien/CSN2, CSN3, CSN4, CSN5, CSN6, CSN7 and CSN8.

It localises to the cytoplasm. Its subcellular location is the nucleus. Its function is as follows. Component of the COP9 signalosome complex (CSN), a complex involved in various cellular and developmental processes. The CSN complex is an essential regulator of the ubiquitin (Ubl) conjugation pathway by mediating the deneddylation of the cullin subunits of the SCF-type E3 ligase complexes, leading to decrease the Ubl ligase activity of SCF. The CSN complex plays an essential role in oogenesis and embryogenesis and is required for proper photoreceptor R cell differentiation and promote lamina glial cell migration or axon targeting. It also promotes Ubl-dependent degradation of cyclin E (CycE) during early oogenesis. The polypeptide is COP9 signalosome complex subunit 6 (CSN6) (Drosophila melanogaster (Fruit fly)).